The sequence spans 161 residues: NADH-quinone oxidoreductase subunit I (161 aa).

2 consecutive 4Fe-4S ferredoxin-type domains span residues 52-82 (LRRYPNGEERCIACKLCEAVCPALAITIESE) and 92-121 (KRYDIDLTKCIFCGFCEEACPVDAVVETRV). Residues Cys62, Cys65, Cys68, Cys72, Cys101, Cys104, Cys107, and Cys111 each coordinate [4Fe-4S] cluster.

The protein belongs to the complex I 23 kDa subunit family. In terms of assembly, NDH-1 is composed of 14 different subunits. Subunits NuoA, H, J, K, L, M, N constitute the membrane sector of the complex. Requires [4Fe-4S] cluster as cofactor.

It localises to the cell inner membrane. It carries out the reaction a quinone + NADH + 5 H(+)(in) = a quinol + NAD(+) + 4 H(+)(out). In terms of biological role, NDH-1 shuttles electrons from NADH, via FMN and iron-sulfur (Fe-S) centers, to quinones in the respiratory chain. The immediate electron acceptor for the enzyme in this species is believed to be ubiquinone. Couples the redox reaction to proton translocation (for every two electrons transferred, four hydrogen ions are translocated across the cytoplasmic membrane), and thus conserves the redox energy in a proton gradient. The polypeptide is NADH-quinone oxidoreductase subunit I (Aromatoleum aromaticum (strain DSM 19018 / LMG 30748 / EbN1) (Azoarcus sp. (strain EbN1))).